The following is a 120-amino-acid chain: UPF0091 protein PH1455 (120 aa).

Belongs to the UPF0091 family.

This is UPF0091 protein PH1455 from Pyrococcus horikoshii (strain ATCC 700860 / DSM 12428 / JCM 9974 / NBRC 100139 / OT-3).